The primary structure comprises 292 residues: Protease HtpX homolog (292 aa).

The next 2 helical transmembrane spans lie at 4-24 (IFLF…TLRL) and 42-62 (ALLV…LAMS). Histidine 147 contacts Zn(2+). Glutamate 148 is a catalytic residue. Position 151 (histidine 151) interacts with Zn(2+). The next 2 helical transmembrane spans lie at 158–178 (VTLA…SRII) and 198–218 (FVTS…IVMW). Glutamate 224 is a Zn(2+) binding site.

This sequence belongs to the peptidase M48B family. Requires Zn(2+) as cofactor.

The protein resides in the cell inner membrane. The protein is Protease HtpX homolog of Nitrosomonas eutropha (strain DSM 101675 / C91 / Nm57).